Here is a 252-residue protein sequence, read N- to C-terminus: Ubiquinone biosynthesis protein COQ4 homolog 2, mitochondrial (252 aa).

4 residues coordinate Zn(2+): His-130, Asp-131, His-134, and Glu-146.

The protein belongs to the COQ4 family. In terms of assembly, component of a multi-subunit COQ enzyme complex. The cofactor is Zn(2+).

Its subcellular location is the mitochondrion inner membrane. It catalyses the reaction a 4-hydroxy-3-methoxy-5-(all-trans-polyprenyl)benzoate + H(+) = a 2-methoxy-6-(all-trans-polyprenyl)phenol + CO2. The protein operates within cofactor biosynthesis; ubiquinone biosynthesis. In terms of biological role, lyase that catalyzes the C1-decarboxylation of 4-hydroxy-3-methoxy-5-(all-trans-polyprenyl)benzoic acid into 2-methoxy-6-(all-trans-polyprenyl)phenol during ubiquinone biosynthesis. The sequence is that of Ubiquinone biosynthesis protein COQ4 homolog 2, mitochondrial from Trypanosoma cruzi (strain CL Brener).